The primary structure comprises 376 residues: 5-amino-6-(D-ribitylamino)uracil--L-tyrosine 4-hydroxyphenyl transferase 1 (376 aa).

Residues 50 to 284 form the Radical SAM core domain; it reads VTYVVNRNIN…AISRILLHGH (235 aa). Residues Cys-64, Cys-68, and Cys-71 each contribute to the [4Fe-4S] cluster site.

Belongs to the radical SAM superfamily. CofH family. In terms of assembly, consists of two subunits, CofG and CofH. [4Fe-4S] cluster serves as cofactor.

It catalyses the reaction 5-amino-6-(D-ribitylamino)uracil + L-tyrosine + S-adenosyl-L-methionine = 5-amino-5-(4-hydroxybenzyl)-6-(D-ribitylimino)-5,6-dihydrouracil + 2-iminoacetate + 5'-deoxyadenosine + L-methionine + H(+). Its pathway is cofactor biosynthesis; coenzyme F0 biosynthesis. In terms of biological role, catalyzes the radical-mediated synthesis of 5-amino-5-(4-hydroxybenzyl)-6-(D-ribitylimino)-5,6-dihydrouracil from 5-amino-6-(D-ribitylamino)uracil and L-tyrosine. The polypeptide is 5-amino-6-(D-ribitylamino)uracil--L-tyrosine 4-hydroxyphenyl transferase 1 (Methanosarcina barkeri (strain Fusaro / DSM 804)).